We begin with the raw amino-acid sequence, 550 residues long: Glucose-6-phosphate isomerase (550 aa).

The Proton donor role is filled by glutamate 355. Residues histidine 386 and lysine 512 contribute to the active site.

The protein belongs to the GPI family.

Its subcellular location is the cytoplasm. The enzyme catalyses alpha-D-glucose 6-phosphate = beta-D-fructose 6-phosphate. It participates in carbohydrate biosynthesis; gluconeogenesis. Its pathway is carbohydrate degradation; glycolysis; D-glyceraldehyde 3-phosphate and glycerone phosphate from D-glucose: step 2/4. In terms of biological role, catalyzes the reversible isomerization of glucose-6-phosphate to fructose-6-phosphate. In Rhodococcus opacus (strain B4), this protein is Glucose-6-phosphate isomerase.